The chain runs to 399 residues: Elongation factor Tu (399 aa).

The tr-type G domain maps to 10–209 (KPHVNIGTIG…EVDAYIPTPE (200 aa)). Residues 19-26 (GHVDHGKT) are G1. 19–26 (GHVDHGKT) serves as a coordination point for GTP. Threonine 26 contacts Mg(2+). The tract at residues 60-64 (GITIA) is G2. Residues 81-84 (DCPG) form a G3 region. GTP contacts are provided by residues 81-85 (DCPGH) and 136-139 (NKQD). Residues 136–139 (NKQD) are G4. A G5 region spans residues 174–176 (SAL).

This sequence belongs to the TRAFAC class translation factor GTPase superfamily. Classic translation factor GTPase family. EF-Tu/EF-1A subfamily. As to quaternary structure, monomer.

It localises to the cytoplasm. It carries out the reaction GTP + H2O = GDP + phosphate + H(+). GTP hydrolase that promotes the GTP-dependent binding of aminoacyl-tRNA to the A-site of ribosomes during protein biosynthesis. The chain is Elongation factor Tu from Helicobacter pylori (strain Shi470).